A 687-amino-acid chain; its full sequence is uncharacterized protein (687 aa).

14 consecutive transmembrane segments (helical) span residues I28–V48, W66–G86, V94–T114, G126–L146, G154–L174, W182–V202, P211–A231, S243–L263, V287–L307, L320–V340, I348–D368, L378–V398, V414–V434, and L480–L500.

The protein belongs to the major facilitator superfamily. TCR/Tet family.

It localises to the cell membrane. This is an uncharacterized protein from Mycobacterium tuberculosis (strain CDC 1551 / Oshkosh).